The primary structure comprises 63 residues: Eumenitin VP1 (63 aa).

A signal peptide spans 1 to 22; the sequence is MRGTSFILFAVVVILGFLHANA. AXPX repeat units lie at residues 22 to 25, 26 to 29, 32 to 35, 40 to 43, and 44 to 47; these read AEPL, ANPA, ANPD, ADPL, and ADPE. A propeptide spanning residues 23–48 is cleaved from the precursor; the sequence is EPLANPAPLANPDPLANADPLADPEA.

Expressed by the venom gland.

It is found in the secreted. Its subcellular location is the target cell membrane. Its function is as follows. Antimicrobial peptide with activities against the fungi B.cinerea (MIC=5 uM) and C.albicans (MIC=100 uM), the Gram-negative bacterium E.coli (MIC=25 uM) and the Gram-positive bacterium S.aureus (MIC=100 uM). Shows cytolytic activity against insect cell lines. Has no hemolytic activity against human erythrocytes. In vivo, peptide injection in the vicinity of the head and thorax of lepidopteran larvae induces feeding disorder followed by death due to starvation. The chain is Eumenitin VP1 from Eumenes pomiformis (Potter wasp).